The following is a 331-amino-acid chain: MTTAAALSVLRLGTRRSTLARAQTEEIAGALRAAGCRVEIVGIQSTGDRHADVPLHEFAGSGVFVAELRAALLRGEVDVVVHSMKDLPTAEIPELAIAAIPRRADPRDALVTGAGCRLAELPTGAIVGTGSPRRAAQLRLLRPDLEIRPIRGNLDTRLGKLHAGGYAALIVAAAGLARLHRSEEAAEFFDPTVMLPAPGQGALAVECRRADIADGGRLAGILAGLDDPATRAAVTAERALLAAVGAGCSAPVGALGVVTADTLQLDAVVVDPSGTTAFRRSLTGTPDDASDLGRRLAADLIRAGADQLLQAPKQTGEPHDPDRHDKGTGRP.

Position 248 is an S-(dipyrrolylmethanemethyl)cysteine (C248). Positions 307–331 are disordered; that stretch reads QLLQAPKQTGEPHDPDRHDKGTGRP. The segment covering 316–331 has biased composition (basic and acidic residues); sequence GEPHDPDRHDKGTGRP.

The protein belongs to the HMBS family. In terms of assembly, monomer. The cofactor is dipyrromethane.

The enzyme catalyses 4 porphobilinogen + H2O = hydroxymethylbilane + 4 NH4(+). It participates in porphyrin-containing compound metabolism; protoporphyrin-IX biosynthesis; coproporphyrinogen-III from 5-aminolevulinate: step 2/4. Its function is as follows. Tetrapolymerization of the monopyrrole PBG into the hydroxymethylbilane pre-uroporphyrinogen in several discrete steps. In Acidothermus cellulolyticus (strain ATCC 43068 / DSM 8971 / 11B), this protein is Porphobilinogen deaminase.